The chain runs to 531 residues: Large neutral amino acids transporter small subunit 2 (531 aa).

The interval 1 to 29 is disordered; the sequence is MEKGARQRNNTAKNHPGSDTSPEAEASSG. Over 1 to 43 the chain is Cytoplasmic; the sequence is MEKGARQRNNTAKNHPGSDTSPEAEASSGGGGVALKKEIGLVS. The span at 7-21 shows a compositional bias: polar residues; that stretch reads QRNNTAKNHPGSDTS. Ser18, Ser21, Ser27, and Ser28 each carry phosphoserine. The chain crosses the membrane as a helical span at residues 44 to 64; it reads ACGIIVGNIIGSGIFVSPKGV. Ile52 is a binding site for L-leucine. Over 65 to 72 the chain is Extracellular; the sequence is LENAGSVG. Residues 73-94 form a helical membrane-spanning segment; that stretch reads LALIVWIVTGIITAVGALCYAE. The Cytoplasmic portion of the chain corresponds to 95 to 115; the sequence is LGVTIPKSGGDYSYVKDIFGG. The chain crosses the membrane as a helical span at residues 116-148; it reads LAGFLRLWIAVLVIYPTNQAVIALTFSNYVLQP. Asn133 is a binding site for L-tryptophan. Residues 149 to 156 are Extracellular-facing; it reads LFPTCFPP. The chain crosses the membrane as a helical span at residues 157 to 177; that stretch reads ESGLRLLAAICLLLLTWVNCS. The Cytoplasmic portion of the chain corresponds to 178 to 180; that stretch reads SVR. Residues 181–209 form a helical membrane-spanning segment; that stretch reads WATRVQDIFTAGKLLALALIIIMGIVQIC. Residues 210–229 lie on the Extracellular side of the membrane; that stretch reads KGEFFWLEPKNAFENFQEPD. Residues 230–251 form a helical membrane-spanning segment; that stretch reads IGLVALAFLQGSFAYGGWNFLN. Gly245 provides a ligand contact to L-leucine. The Cytoplasmic segment spans residues 252-264; it reads YVTEELVDPYKNL. Residues 265 to 286 form a helical membrane-spanning segment; the sequence is PRAIFISIPLVTFVYVFANIAY. At 287–311 the chain is on the extracellular side; sequence VTAMSPQELLASNAVAVTFGEKLLG. A helical membrane pass occupies residues 312–337; sequence VMAWIMPISVALSTFGGVNGSLFTSS. The Cytoplasmic segment spans residues 338 to 363; sequence RLFFAGAREGHLPSVLAMIHVKRCTP. Residues 364 to 381 traverse the membrane as a helical segment; sequence IPALLFTCLSTLLMLVTS. At 382–385 the chain is on the extracellular side; the sequence is DMYT. A helical transmembrane segment spans residues 386–407; sequence LINYVGFINYLFYGVTVAGQIV. Asn394 is an L-tryptophan binding site. Topologically, residues 408–422 are cytoplasmic; the sequence is LRWKKPDIPRPIKVS. 2 consecutive transmembrane segments (helical) span residues 423–445 and 446–465; these read LLFPIIYLLFWAFLLIFSLWSEP and VVCGIGLAIMLTGVPVYFLG. Topologically, residues 466 to 531 are cytoplasmic; it reads VYWQHKPKCF…VKDPDSEEQP (66 aa). The interval 499–531 is disordered; sequence NSGAEETTDDLEEQHKPIFKPTPVKDPDSEEQP. Ser527 is modified (phosphoserine).

Belongs to the amino acid-polyamine-organocation (APC) superfamily. L-type amino acid transporter (LAT) (TC 2.A.3.8) family. In terms of assembly, disulfide-linked heterodimer composed of the catalytic light chain subunit SLC7A8 and the heavy chain subunit SLC3A2. SLC3A2 acts as a chaperone for correct plasma membrane trafficking and stabilization of SLC7A8 and modulates the substrate affinity and specificity of SLC7A8. ICAM-1 associates with the heterodimer SLC3A2/SLC7A8; facilitates leucine uptake. In terms of tissue distribution, strongly expressed in kidney and small intestine. Moderately present in placenta, ovary and brain. Expressed in the inner ear.

Its subcellular location is the cell membrane. It is found in the basolateral cell membrane. It catalyses the reaction L-histidine(in) + L-phenylalanine(out) = L-histidine(out) + L-phenylalanine(in). It carries out the reaction L-tryptophan(in) + L-phenylalanine(out) = L-tryptophan(out) + L-phenylalanine(in). The catalysed reaction is L-isoleucine(in) + L-phenylalanine(out) = L-isoleucine(out) + L-phenylalanine(in). The enzyme catalyses L-valine(in) + L-phenylalanine(out) = L-valine(out) + L-phenylalanine(in). It catalyses the reaction L-leucine(in) + L-phenylalanine(out) = L-leucine(out) + L-phenylalanine(in). It carries out the reaction L-glutamine(in) + L-phenylalanine(out) = L-glutamine(out) + L-phenylalanine(in). The catalysed reaction is L-cysteine(in) + L-phenylalanine(out) = L-cysteine(out) + L-phenylalanine(in). The enzyme catalyses L-phenylalanine(out) + L-methionine(in) = L-phenylalanine(in) + L-methionine(out). It catalyses the reaction L-leucine(out) + L-methionine(in) = L-leucine(in) + L-methionine(out). It carries out the reaction L-cysteine(out) + L-methionine(in) = L-cysteine(in) + L-methionine(out). The catalysed reaction is S-methylmercury-L-cysteine(out) + L-methionine(in) = S-methylmercury-L-cysteine(in) + L-methionine(out). The enzyme catalyses S-methylmercury-L-cysteine(in) + L-leucine(out) = S-methylmercury-L-cysteine(out) + L-leucine(in). It catalyses the reaction S-methylmercury-L-cysteine(in) + L-phenylalanine(out) = S-methylmercury-L-cysteine(out) + L-phenylalanine(in). It carries out the reaction L-phenylalanine(out) + L-serine(in) = L-phenylalanine(in) + L-serine(out). The catalysed reaction is L-phenylalanine(out) + glycine(in) = L-phenylalanine(in) + glycine(out). The enzyme catalyses L-phenylalanine(out) + L-alanine(in) = L-phenylalanine(in) + L-alanine(out). It catalyses the reaction L-tryptophan(in) = L-tryptophan(out). It carries out the reaction 3,3',5-triiodo-L-thyronine(out) = 3,3',5-triiodo-L-thyronine(in). The catalysed reaction is 3,3'-diiodo-L-thyronine(out) = 3,3'-diiodo-L-thyronine(in). The enzyme catalyses L-dopa(out) + L-phenylalanine(in) = L-dopa(in) + L-phenylalanine(out). In terms of biological role, associates with SLC3A2 to form a functional heterodimeric complex that translocates small and large neutral amino acids with broad specificity and a stoichiometry of 1:1. Functions as amino acid antiporter mediating the influx of extracellular essential amino acids mainly in exchange with the efflux of highly concentrated intracellular amino acids. Has relatively symmetrical selectivities but strongly asymmetrical substrate affinities at both the intracellular and extracellular sides of the transporter. This asymmetry allows SLC7A8 to regulate intracellular amino acid pools (mM concentrations) by exchange with external amino acids (uM concentration range), equilibrating the relative concentrations of different amino acids across the plasma membrane instead of mediating their net uptake. May play an essential role in the reabsorption of neutral amino acids from the epithelial cells to the bloodstream in the kidney. Involved in the uptake of methylmercury (MeHg) when administered as the L-cysteine or D,L-homocysteine complexes, and hence plays a role in metal ion homeostasis and toxicity. Involved in the cellular activity of small molecular weight nitrosothiols, via the stereoselective transport of L-nitrosocysteine (L-CNSO) across the transmembrane. Imports the thyroid hormone diiodothyronine (T2) and to a smaller extent triiodothyronine (T3) but not rT 3 or thyroxine (T4). Mediates the uptake of L-DOPA. May participate in auditory function. In Mus musculus (Mouse), this protein is Large neutral amino acids transporter small subunit 2 (Slc7a8).